Reading from the N-terminus, the 353-residue chain is Purine nucleoside phosphorylase (353 aa).

The span at 1 to 16 (MSKFSYLQNGKASTNG) shows a compositional bias: polar residues. The tract at residues 1–42 (MSKFSYLQNGKASTNGVPHANGHHQQHQNGHSNGVARNGGTA) is disordered. Phosphate contacts are provided by residues S98, H129, 149–151 (RFH), and A181. E266 is a binding site for a purine D-ribonucleoside. A phosphate-binding site is contributed by S285. A purine D-ribonucleoside is bound at residue N308.

Belongs to the PNP/MTAP phosphorylase family. In terms of assembly, homotrimer.

It catalyses the reaction inosine + phosphate = alpha-D-ribose 1-phosphate + hypoxanthine. The enzyme catalyses guanosine + phosphate = alpha-D-ribose 1-phosphate + guanine. It carries out the reaction 2'-deoxyguanosine + phosphate = 2-deoxy-alpha-D-ribose 1-phosphate + guanine. The catalysed reaction is 2'-deoxyinosine + phosphate = 2-deoxy-alpha-D-ribose 1-phosphate + hypoxanthine. Its pathway is purine metabolism; purine nucleoside salvage. Inhibited by 5'-deaza-1'-aza-2c-deoxy-1'-(9-methylene) immucillin-H (DADMe-ImmH). Its function is as follows. As part of the purine salvage pathway, catalyzes the phosphorolytic breakdown of the N-glycosidic bond in the beta-(deoxy)ribonucleoside molecules, with the formation of the corresponding free purine bases and pentose-1-phosphate. Preferentially acts on 2'-deoxyinosine and inosine, and to a lesser extent on 2'-deoxyguanosine and guanosine. Has no activity towards adenosine or 2'-deoxyadenosine. This is Purine nucleoside phosphorylase from Anopheles gambiae (African malaria mosquito).